The chain runs to 523 residues: 2-hydroxyisoflavanone synthase (523 aa).

A helical transmembrane segment spans residues 2 to 22 (LVELAITLLVIALFIHLRPTP). Cys-450 lines the heme pocket.

Belongs to the cytochrome P450 family. Heme serves as cofactor.

Its subcellular location is the microsome membrane. The enzyme catalyses (2S)-liquiritigenin + reduced [NADPH--hemoprotein reductase] + O2 = (2R,3S)-2,4',7-trihydroxyisoflavanone + oxidized [NADPH--hemoprotein reductase] + H2O + H(+). The catalysed reaction is (2S)-naringenin + reduced [NADPH--hemoprotein reductase] + O2 = 2-hydroxy-2,3-dihydrogenistein + oxidized [NADPH--hemoprotein reductase] + H2O + H(+). In terms of biological role, 2-hydroxyisoflavanone synthase, which catalyzes the hydroxylation associated with 1,2-aryl migration of flavanones. Converts liquiritigenin and naringenin into highly unstable precursors of the isoflavones daidzein and genistein. The polypeptide is 2-hydroxyisoflavanone synthase (CYP93C2) (Glycyrrhiza uralensis (Chinese licorice)).